Consider the following 280-residue polypeptide: Large ribosomal subunit protein uL2 (280 aa).

The interval 223 to 280 (VVMNPVDHPHGGGEGRTSGGRHPVTPWGKPTKGARTRNKNKASSKLIIRSRHAKKKGR) is disordered. Positions 254–280 (KGARTRNKNKASSKLIIRSRHAKKKGR) are enriched in basic residues.

The protein belongs to the universal ribosomal protein uL2 family. Part of the 50S ribosomal subunit. Forms a bridge to the 30S subunit in the 70S ribosome.

One of the primary rRNA binding proteins. Required for association of the 30S and 50S subunits to form the 70S ribosome, for tRNA binding and peptide bond formation. It has been suggested to have peptidyltransferase activity; this is somewhat controversial. Makes several contacts with the 16S rRNA in the 70S ribosome. This Dinoroseobacter shibae (strain DSM 16493 / NCIMB 14021 / DFL 12) protein is Large ribosomal subunit protein uL2.